Consider the following 341-residue polypeptide: Phenylalanine--tRNA ligase alpha subunit (341 aa).

Glu259 provides a ligand contact to Mg(2+).

It belongs to the class-II aminoacyl-tRNA synthetase family. Phe-tRNA synthetase alpha subunit type 1 subfamily. In terms of assembly, tetramer of two alpha and two beta subunits. Requires Mg(2+) as cofactor.

The protein resides in the cytoplasm. The enzyme catalyses tRNA(Phe) + L-phenylalanine + ATP = L-phenylalanyl-tRNA(Phe) + AMP + diphosphate + H(+). This is Phenylalanine--tRNA ligase alpha subunit from Mycobacterium bovis (strain ATCC BAA-935 / AF2122/97).